The following is a 70-amino-acid chain: Conotoxin Lt3.4 (70 aa).

The signal sequence occupies residues 1 to 24 (MLKMGVLLFTFLVLFPLAMFQLDA). The propeptide occupies 25–54 (DQPVERYAENKQDLNRDERMKIMLSALRQR). Pyrrolidone carboxylic acid is present on Gln55. Disulfide bonds link Cys56-Cys68, Cys57-Cys66, and Cys62-Cys69.

Belongs to the conotoxin M superfamily. As to expression, expressed by the venom duct.

It localises to the secreted. The chain is Conotoxin Lt3.4 from Conus litteratus (Lettered cone).